Consider the following 701-residue polypeptide: Elongation factor G (701 aa).

One can recognise a tr-type G domain in the interval 11–287; that stretch reads SRVRNFGIMA…AVVDYLPSPL (277 aa). GTP contacts are provided by residues 20–27, 84–88, and 138–141; these read AHIDAGKT, DTPGH, and NKMD.

It belongs to the TRAFAC class translation factor GTPase superfamily. Classic translation factor GTPase family. EF-G/EF-2 subfamily.

The protein resides in the cytoplasm. In terms of biological role, catalyzes the GTP-dependent ribosomal translocation step during translation elongation. During this step, the ribosome changes from the pre-translocational (PRE) to the post-translocational (POST) state as the newly formed A-site-bound peptidyl-tRNA and P-site-bound deacylated tRNA move to the P and E sites, respectively. Catalyzes the coordinated movement of the two tRNA molecules, the mRNA and conformational changes in the ribosome. The sequence is that of Elongation factor G (fusA) from Mycobacterium tuberculosis (strain CDC 1551 / Oshkosh).